Reading from the N-terminus, the 576-residue chain is Arginine--tRNA ligase (576 aa).

Residues alanine 126–histidine 136 carry the 'HIGH' region motif.

The protein belongs to the class-I aminoacyl-tRNA synthetase family. In terms of assembly, monomer.

It localises to the cytoplasm. It carries out the reaction tRNA(Arg) + L-arginine + ATP = L-arginyl-tRNA(Arg) + AMP + diphosphate. In Rickettsia africae (strain ESF-5), this protein is Arginine--tRNA ligase.